A 68-amino-acid chain; its full sequence is Large ribosomal subunit protein bL31 (68 aa).

Belongs to the bacterial ribosomal protein bL31 family. Type A subfamily. As to quaternary structure, part of the 50S ribosomal subunit.

In terms of biological role, binds the 23S rRNA. In Helicobacter hepaticus (strain ATCC 51449 / 3B1), this protein is Large ribosomal subunit protein bL31.